The following is a 323-amino-acid chain: CD-NTase-associated protein 12 (323 aa).

The region spanning 4–120 (RIFIGSSSEQ…LDGITVAKFT (117 aa)) is the TIR domain. Glutamate 84 is an active-site residue. The STING domain stretch occupies residues 154 to 323 (STALAIGYYN…YVNVLTNVKL (170 aa)). Serine 164, phenylalanine 165, arginine 234, proline 237, aspartate 259, serine 262, and threonine 263 together coordinate 3',3'-c-di-GMP.

It in the C-terminal section; belongs to the bacterial STING family. As to quaternary structure, forms homodimers which subsequently form filaments. In vitro in the presence of c-di-GMP forms filaments up to 300 nm in length with an ordered array of parallel-stacked subunits, where the TIR domains form one face of the filament and the STING domains form the other face. Antiparallel double-filament structures are also seen. 3'3'-cGAMP weakly induces filament formation, while 2'3'-cGAMP does not.

The enzyme catalyses NAD(+) + H2O = ADP-D-ribose + nicotinamide + H(+). Its activity is regulated as follows. NAD(+) hydrolase activity is strongly stimulated by c-di-GMP, weakly by 3'3'-cGAMP, very weakly by c-di-AMP and not at all by 2'3'-cGAMP. Self-association of TIR domains is required for NADase activity. Effector protein of a CBASS antiviral system with NAD(+) hydrolase activity. CBASS (cyclic oligonucleotide-based antiphage signaling system) provides immunity against bacteriophage. The CD-NTase protein synthesizes cyclic nucleotides in response to infection; these serve as specific second messenger signals. The signals activate a diverse range of effectors, leading to bacterial cell death and thus abortive phage infection. A type I-D(GG) CBASS system. Functionally, upon activation by 3'3'-c-di-GMP forms filaments which hydrolyze NAD(+); filament formation is required for enzyme activation. Induction in an E.coli strain that synthesizes c-di-GMP leads to significant growth inhibition. Binds c-di-GMP and 3'3'-cGAMP (3'3'-cyclic GMP-AMP), but not c-di-AMP, 2'3'-cGAMP or cUMP-AMP. The polypeptide is CD-NTase-associated protein 12 (Sphingobacterium faecium (strain DSM 11690 / JCM 21820 / NBRC 15299 / NCIMB 13408 / KS 0470)).